A 127-amino-acid chain; its full sequence is F420-non-reducing hydrogenase subunit G (127 aa).

It belongs to the [NiFe]/[NiFeSe] hydrogenase small subunit family. In terms of assembly, the F420-non-reducing hydrogenase is composed of three subunits; MvhA, MvhD and MvhG. It forms a complex with the heterodisulfide reductase (hdr).

Its function is as follows. Part of a complex that provides reducing equivalents for heterodisulfide reductase. This Methanothermus fervidus protein is F420-non-reducing hydrogenase subunit G (mvhG).